Here is a 203-residue protein sequence, read N- to C-terminus: Pyridoxal 5'-phosphate synthase subunit PdxT (203 aa).

An L-glutamine-binding site is contributed by 49–51 (GES). Residue Cys81 is the Nucleophile of the active site. L-glutamine-binding positions include Arg110 and 139-140 (IR). Catalysis depends on charge relay system residues His175 and Glu177.

This sequence belongs to the glutaminase PdxT/SNO family. In the presence of PdxS, forms a dodecamer of heterodimers. Only shows activity in the heterodimer.

The catalysed reaction is aldehydo-D-ribose 5-phosphate + D-glyceraldehyde 3-phosphate + L-glutamine = pyridoxal 5'-phosphate + L-glutamate + phosphate + 3 H2O + H(+). The enzyme catalyses L-glutamine + H2O = L-glutamate + NH4(+). The protein operates within cofactor biosynthesis; pyridoxal 5'-phosphate biosynthesis. Catalyzes the hydrolysis of glutamine to glutamate and ammonia as part of the biosynthesis of pyridoxal 5'-phosphate. The resulting ammonia molecule is channeled to the active site of PdxS. This chain is Pyridoxal 5'-phosphate synthase subunit PdxT, found in Parafrankia sp. (strain EAN1pec).